The chain runs to 1605 residues: Zinc finger protein jing homolog (1605 aa).

The segment covering 1-15 has biased composition (polar residues); sequence MQHQSLSVRNSSGIS. Disordered regions lie at residues 1 to 28, 60 to 117, 359 to 388, 441 to 468, 856 to 877, 917 to 947, and 991 to 1213; these read MQHQ…VRSS, QWPW…QQSN, TRKV…TSDP, QQHQ…TQAQ, STTS…PPKL, TKAT…ASCT, and NDSG…TDFL. Over residues 64–117 the composition is skewed to low complexity; sequence NTSNNTNATNSNNVQSNNNSSTATSNSSTNSNNSPAVNTPTTQNQSQPTTQQSN. Over residues 991–1000 the composition is skewed to polar residues; sequence NDSGIVANSS. The span at 1021–1030 shows a compositional bias: basic and acidic residues; the sequence is PQKKDEESRQ. Pro residues predominate over residues 1035–1049; it reads SPVPSPSPLSEPPVI. 2 stretches are compositionally biased toward acidic residues: residues 1053–1090 and 1099–1110; these read SEPE…DEPH and SSEAVELPELED. Pro residues predominate over residues 1112–1126; that stretch reads QPSPPLPCELPPPPT. A compositionally biased stretch (low complexity) spans 1135–1149; sequence LSLPPSQKSPKSLLL. Positions 1165–1201 are enriched in polar residues; the sequence is QESMSSDQDYSNQSPLDESSPTGSAEPSESQRSTTPV. A C2H2-type 1 zinc finger spans residues 1260 to 1285; that stretch reads GVCYWSNCDAQFDTSSKLLDHLQIQH. The C2H2-type 2; degenerate zinc finger occupies 1293–1320; sequence FACLWDGCKVHNKESCSRRWLERHVLSH. The segment at 1326–1350 adopts a C2H2-type 3 zinc-finger fold; it reads HKCIVAGCGMRFGSQLALEKHVNHH. 2 disordered regions span residues 1352-1371 and 1511-1605; these read NNTD…LPKV and CSRS…SSTS. Low complexity-rich tracts occupy residues 1511-1537 and 1556-1605; these read CSRS…SLIS and KQSY…SSTS.

Belongs to the AEBP2/jing C2H2-type zinc-finger family.

The protein localises to the nucleus. May functionally interact with Polycomb group (PcG) and trithorax group (trxG) proteins to repress transcription. This is Zinc finger protein jing homolog from Aedes aegypti (Yellowfever mosquito).